Consider the following 497-residue polypeptide: Probable polyamine oxidase 4 (497 aa).

FAD is bound by residues glutamate 58, arginine 66, valine 247, and glutamate 435. A Microbody targeting signal motif is present at residues 495 to 497; the sequence is SRM.

The protein belongs to the flavin monoamine oxidase family. Requires FAD as cofactor. As to expression, highly expressed in roots, flowers and greening cotelydons. Lower expression in other tissues.

The protein localises to the peroxisome. It carries out the reaction spermine + O2 + H2O = 3-aminopropanal + spermidine + H2O2. The enzyme catalyses spermidine + O2 + H2O = 3-aminopropanal + putrescine + H2O2. It functions in the pathway amine and polyamine degradation; spermine degradation. It participates in amine and polyamine degradation; spermidine degradation. Flavoenzyme involved in polyamine back-conversion. Catalyzes the oxidation of the secondary amino group of polyamines, such as spermine and spermidine. Substrate preference is spermine &gt; spermidine. No activity detected when putrescine or N(1)-acetylspermine are used as substrates. Plays an important role in the regulation of polyamine intracellular concentration. The sequence is that of Probable polyamine oxidase 4 (PAO4) from Arabidopsis thaliana (Mouse-ear cress).